Reading from the N-terminus, the 618-residue chain is Phosphoenolpyruvate carboxykinase [GTP] (618 aa).

Residues Arg-83 and 217–219 (YGG) contribute to the substrate site. Mn(2+)-binding residues include Lys-226 and His-245. Residue Ser-267 coordinates substrate. 268-273 (MCGKTS) provides a ligand contact to GTP. Cys-269 is a catalytic residue. Residue Asp-286 participates in Mn(2+) binding. 381–383 (NAR) is a binding site for substrate. GTP-binding residues include Arg-383 and Arg-415.

It belongs to the phosphoenolpyruvate carboxykinase [GTP] family. Mn(2+) serves as cofactor.

It localises to the cytoplasm. It catalyses the reaction oxaloacetate + GTP = phosphoenolpyruvate + GDP + CO2. It functions in the pathway carbohydrate biosynthesis; gluconeogenesis. Its function is as follows. Catalyzes the conversion of oxaloacetate (OAA) to phosphoenolpyruvate (PEP), the rate-limiting step in the metabolic pathway that produces glucose from lactate and other precursors derived from the citric acid cycle. This chain is Phosphoenolpyruvate carboxykinase [GTP], found in Pyrococcus abyssi (strain GE5 / Orsay).